A 306-amino-acid polypeptide reads, in one-letter code: Large ribosomal subunit protein uL2m (306 aa).

The N-terminal 60 residues, 1–60, are a transit peptide targeting the mitochondrion; sequence MALRVVTRALGSLSLTPRIAAVPGPSLLPAAQVTNNVLLQLPSASMLLPSRPLLTSVALS.

The protein belongs to the universal ribosomal protein uL2 family. In terms of assembly, component of the mitochondrial ribosome large subunit (39S) which comprises a 16S rRNA and about 50 distinct proteins.

It localises to the mitochondrion. This Bos taurus (Bovine) protein is Large ribosomal subunit protein uL2m (MRPL2).